The following is a 219-amino-acid chain: Transmembrane protein 247 (219 aa).

Composition is skewed to basic and acidic residues over residues 1 to 10 (MAAEDREMME) and 29 to 45 (SKSEGKPRAYLEAESQK). Residues 1–101 (MAAEDREMME…LPPTPGTERN (101 aa)) form a disordered region. Residues 121-156 (LHEKNQRQRQHEVVMEQLQRERQHEVVMEQLQQEAA) adopt a coiled-coil conformation. 2 helical membrane passes run 167-187 (FLLPQNQFAMFLYCFIFIHII) and 194-214 (VFFLFAKHYLFCIAAILLCLI).

It localises to the membrane. This chain is Transmembrane protein 247 (TMEM247), found in Homo sapiens (Human).